The chain runs to 281 residues: Aliphatic sulfonates import ATP-binding protein SsuB (281 aa).

The 224-residue stretch at 40–263 (LDIRGLRKSF…QRGSAELAAL (224 aa)) folds into the ABC transporter domain. Residue 72 to 79 (GRSGCGKS) coordinates ATP.

The protein belongs to the ABC transporter superfamily. Aliphatic sulfonates importer (TC 3.A.1.17.2) family. As to quaternary structure, the complex is composed of two ATP-binding proteins (SsuB), two transmembrane proteins (SsuC) and a solute-binding protein (SsuA).

Its subcellular location is the cell inner membrane. The catalysed reaction is ATP + H2O + aliphatic sulfonate-[sulfonate-binding protein]Side 1 = ADP + phosphate + aliphatic sulfonateSide 2 + [sulfonate-binding protein]Side 1.. Its function is as follows. Part of the ABC transporter complex SsuABC involved in aliphatic sulfonates import. Responsible for energy coupling to the transport system. In Rhodopseudomonas palustris (strain ATCC BAA-98 / CGA009), this protein is Aliphatic sulfonates import ATP-binding protein SsuB.